The following is a 149-amino-acid chain: Globin (149 aa).

The Globin domain occupies 2–149 (VLTKDEFDSL…KIFTGVAGQL (148 aa)). Residue H100 coordinates heme.

This sequence belongs to the globin family. As to quaternary structure, monomer.

Its function is as follows. Oxygen binding protein. The protein is Globin of Isoparorchis hypselobagri (Giant trematode).